Here is a 353-residue protein sequence, read N- to C-terminus: DNA-directed RNA polymerase subunit alpha (353 aa).

The segment at 1–234 (MVREKVTVST…DLFIPFLHTE (234 aa)) is alpha N-terminal domain (alpha-NTD). Positions 267–353 (KRALKSIFID…LAQLIDSKSG (87 aa)) are alpha C-terminal domain (alpha-CTD).

This sequence belongs to the RNA polymerase alpha chain family. In plastids the minimal PEP RNA polymerase catalytic core is composed of four subunits: alpha, beta, beta', and beta''. When a (nuclear-encoded) sigma factor is associated with the core the holoenzyme is formed, which can initiate transcription.

It localises to the plastid. The protein resides in the chloroplast. The catalysed reaction is RNA(n) + a ribonucleoside 5'-triphosphate = RNA(n+1) + diphosphate. DNA-dependent RNA polymerase catalyzes the transcription of DNA into RNA using the four ribonucleoside triphosphates as substrates. In Daucus carota (Wild carrot), this protein is DNA-directed RNA polymerase subunit alpha.